The sequence spans 320 residues: Glyoxylate/hydroxypyruvate reductase B (320 aa).

Catalysis depends on residues Arg233 and Glu262. The active-site Proton donor is His281.

This sequence belongs to the D-isomer specific 2-hydroxyacid dehydrogenase family. GhrB subfamily. As to quaternary structure, homodimer.

Its subcellular location is the cytoplasm. It catalyses the reaction glycolate + NADP(+) = glyoxylate + NADPH + H(+). The catalysed reaction is (R)-glycerate + NAD(+) = 3-hydroxypyruvate + NADH + H(+). It carries out the reaction (R)-glycerate + NADP(+) = 3-hydroxypyruvate + NADPH + H(+). Catalyzes the NADPH-dependent reduction of glyoxylate and hydroxypyruvate into glycolate and glycerate, respectively. This Pectobacterium carotovorum subsp. carotovorum (strain PC1) protein is Glyoxylate/hydroxypyruvate reductase B.